We begin with the raw amino-acid sequence, 144 residues long: Ribosome-binding factor A (144 aa).

2 disordered regions span residues 1-22 (MPRH…QLRV) and 125-144 (TPAV…EEEQ). The segment covering 134–144 (QDPDSDREEEQ) has biased composition (acidic residues).

It belongs to the RbfA family. In terms of assembly, monomer. Binds 30S ribosomal subunits, but not 50S ribosomal subunits or 70S ribosomes.

The protein resides in the cytoplasm. In terms of biological role, one of several proteins that assist in the late maturation steps of the functional core of the 30S ribosomal subunit. Associates with free 30S ribosomal subunits (but not with 30S subunits that are part of 70S ribosomes or polysomes). Required for efficient processing of 16S rRNA. May interact with the 5'-terminal helix region of 16S rRNA. This Bradyrhizobium diazoefficiens (strain JCM 10833 / BCRC 13528 / IAM 13628 / NBRC 14792 / USDA 110) protein is Ribosome-binding factor A.